The chain runs to 760 residues: DEAD-box ATP-dependent RNA helicase 24 (760 aa).

2 disordered regions span residues 1-76 and 90-113; these read MSNR…GEVD and QEMKSAPPPKPKEKLERYKDDDDD. Polar residues predominate over residues 14 to 27; the sequence is NRQTSYSFERSQAP. Positions 41–64 are enriched in acidic residues; that stretch reads NSEDADLDNIDYMENEEAEEDIEE. Residues 99-109 are compositionally biased toward basic and acidic residues; it reads KPKEKLERYKD. The residue at position 160 (Ser160) is a Phosphoserine. Residues 228–256 carry the Q motif motif; it reads KTFEDCGFSSQIMSAIKKQAYEKPTAIQC. The region spanning 259-434 is the Helicase ATP-binding domain; sequence LPIVLSGRDV…REILSDPIRV (176 aa). 272 to 279 is an ATP binding site; it reads AKTGSGKT. A DEAD box motif is present at residues 382-385; it reads DEAD. A Helicase C-terminal domain is found at 459–608; that stretch reads KLPWLLEKLP…NVPPELTDLA (150 aa). 3 disordered regions span residues 604–638, 647–666, and 706–760; these read LTDLAMKDGRFKSKRDGRKGGKKGRGGGGGNKGVR, GFSSESSRTPSSKAAPSRSG, and FVSG…GWDN. Residues 615 to 628 are compositionally biased toward basic residues; it reads KSKRDGRKGGKKGR. Positions 629–638 are enriched in gly residues; that stretch reads GGGGGNKGVR. The segment covering 649–666 has biased composition (polar residues); it reads SSESSRTPSSKAAPSRSG. The segment covering 707–716 has biased composition (gly residues); that stretch reads VSGGTIGGDM. Residues 718-732 are compositionally biased toward polar residues; the sequence is RTQSQAPPVAPTQNA. Low complexity predominate over residues 733–745; that stretch reads SSHNSSQNHSQSS. Residues 750–760 are compositionally biased toward basic residues; sequence RERKRRSGWDN.

This sequence belongs to the DEAD box helicase family.

It catalyses the reaction ATP + H2O = ADP + phosphate + H(+). In Arabidopsis thaliana (Mouse-ear cress), this protein is DEAD-box ATP-dependent RNA helicase 24 (RH24).